A 314-amino-acid chain; its full sequence is 4-hydroxy-3-methylbut-2-enyl diphosphate reductase (314 aa).

Cys-12 lines the [4Fe-4S] cluster pocket. (2E)-4-hydroxy-3-methylbut-2-enyl diphosphate-binding residues include His-43 and His-81. Dimethylallyl diphosphate-binding residues include His-43 and His-81. Isopentenyl diphosphate contacts are provided by His-43 and His-81. Cys-103 is a binding site for [4Fe-4S] cluster. His-131 is a binding site for (2E)-4-hydroxy-3-methylbut-2-enyl diphosphate. His-131 is a dimethylallyl diphosphate binding site. His-131 contributes to the isopentenyl diphosphate binding site. Glu-133 acts as the Proton donor in catalysis. Thr-170 provides a ligand contact to (2E)-4-hydroxy-3-methylbut-2-enyl diphosphate. Position 198 (Cys-198) interacts with [4Fe-4S] cluster. 3 residues coordinate (2E)-4-hydroxy-3-methylbut-2-enyl diphosphate: Ser-226, Asn-228, and Ser-271. 3 residues coordinate dimethylallyl diphosphate: Ser-226, Asn-228, and Ser-271. Residues Ser-226, Asn-228, and Ser-271 each contribute to the isopentenyl diphosphate site.

This sequence belongs to the IspH family. [4Fe-4S] cluster is required as a cofactor.

The catalysed reaction is isopentenyl diphosphate + 2 oxidized [2Fe-2S]-[ferredoxin] + H2O = (2E)-4-hydroxy-3-methylbut-2-enyl diphosphate + 2 reduced [2Fe-2S]-[ferredoxin] + 2 H(+). The enzyme catalyses dimethylallyl diphosphate + 2 oxidized [2Fe-2S]-[ferredoxin] + H2O = (2E)-4-hydroxy-3-methylbut-2-enyl diphosphate + 2 reduced [2Fe-2S]-[ferredoxin] + 2 H(+). The protein operates within isoprenoid biosynthesis; dimethylallyl diphosphate biosynthesis; dimethylallyl diphosphate from (2E)-4-hydroxy-3-methylbutenyl diphosphate: step 1/1. It participates in isoprenoid biosynthesis; isopentenyl diphosphate biosynthesis via DXP pathway; isopentenyl diphosphate from 1-deoxy-D-xylulose 5-phosphate: step 6/6. In terms of biological role, catalyzes the conversion of 1-hydroxy-2-methyl-2-(E)-butenyl 4-diphosphate (HMBPP) into a mixture of isopentenyl diphosphate (IPP) and dimethylallyl diphosphate (DMAPP). Acts in the terminal step of the DOXP/MEP pathway for isoprenoid precursor biosynthesis. The protein is 4-hydroxy-3-methylbut-2-enyl diphosphate reductase of Shouchella clausii (strain KSM-K16) (Alkalihalobacillus clausii).